We begin with the raw amino-acid sequence, 158 residues long: 2-C-methyl-D-erythritol 2,4-cyclodiphosphate synthase (158 aa).

A divalent metal cation-binding residues include aspartate 9 and histidine 11. Residues 9–11 (DVH) and 35–36 (HS) contribute to the 4-CDP-2-C-methyl-D-erythritol 2-phosphate site. Position 43 (histidine 43) interacts with a divalent metal cation. 4-CDP-2-C-methyl-D-erythritol 2-phosphate-binding positions include 57–59 (DIG), 62–66 (FPDTD), 101–107 (AQAPKMA), 133–136 (TTTE), phenylalanine 140, and arginine 143.

It belongs to the IspF family. As to quaternary structure, homotrimer. The cofactor is a divalent metal cation.

It catalyses the reaction 4-CDP-2-C-methyl-D-erythritol 2-phosphate = 2-C-methyl-D-erythritol 2,4-cyclic diphosphate + CMP. Its pathway is isoprenoid biosynthesis; isopentenyl diphosphate biosynthesis via DXP pathway; isopentenyl diphosphate from 1-deoxy-D-xylulose 5-phosphate: step 4/6. In terms of biological role, involved in the biosynthesis of isopentenyl diphosphate (IPP) and dimethylallyl diphosphate (DMAPP), two major building blocks of isoprenoid compounds. Catalyzes the conversion of 4-diphosphocytidyl-2-C-methyl-D-erythritol 2-phosphate (CDP-ME2P) to 2-C-methyl-D-erythritol 2,4-cyclodiphosphate (ME-CPP) with a corresponding release of cytidine 5-monophosphate (CMP). The sequence is that of 2-C-methyl-D-erythritol 2,4-cyclodiphosphate synthase from Vibrio cholerae serotype O1 (strain ATCC 39541 / Classical Ogawa 395 / O395).